The primary structure comprises 725 residues: Kinesin-like protein KIN-8A (725 aa).

The interval 1-32 (MPVSTRSKVMKQERNEQENTNLNLPLRNPHQG) is disordered. The Kinesin motor domain maps to 151–481 (RILVFVRLRP…LHWADRAKEI (331 aa)). 243–250 (GATGAGKT) lines the ATP pocket. Coiled-coil stretches lie at residues 499–541 (EGAD…AANN) and 583–617 (ESLKRTKAEEAVKELQLTVKALKMEMERMKREHGL). Disordered regions lie at residues 652-672 (GSLRPKEKEKELKSPSHRFAS) and 691-725 (SPALDRRKTRSHGLVHQEAPSKLLQPGFARPHMKH). The span at 655–665 (RPKEKEKELKS) shows a compositional bias: basic and acidic residues.

It belongs to the TRAFAC class myosin-kinesin ATPase superfamily. Kinesin family. KIN-8 subfamily.

The polypeptide is Kinesin-like protein KIN-8A (Arabidopsis thaliana (Mouse-ear cress)).